A 293-amino-acid chain; its full sequence is DOMON domain-containing protein FRRS1L (293 aa).

The first 28 residues, methionine 1–alanine 28, serve as a signal peptide directing secretion. The tract at residues serine 29 to serine 61 is disordered. Residues alanine 46 to serine 61 show a composition bias toward basic and acidic residues. Positions cysteine 119–alanine 234 constitute a DOMON domain. Residues threonine 271 to glycine 291 form a helical membrane-spanning segment.

Component of the outer core of AMPAR complex. AMPAR complex consists of an inner core made of 4 pore-forming GluA/GRIA proteins (GRIA1, GRIA2, GRIA3 and GRIA4) and 4 major auxiliary subunits arranged in a twofold symmetry. One of the two pairs of distinct binding sites is occupied either by CNIH2, CNIH3 or CACNG2, CACNG3. The other harbors CACNG2, CACNG3, CACNG4, CACNG8 or GSG1L. This inner core of AMPAR complex is complemented by outer core constituents binding directly to the GluA/GRIA proteins at sites distinct from the interaction sites of the inner core constituents. Outer core constituents include at least PRRT1, PRRT2, CKAMP44/SHISA9, FRRS1L and NRN1. The proteins of the inner and outer core serve as a platform for other, more peripherally associated AMPAR constituents. Alone or in combination, these auxiliary subunits control the gating and pharmacology of the AMPAR complex and profoundly impact their biogenesis and protein processing. Expressed in adult and fetal brain. Very weak expression in medulla, spinal cord and in adult ovary.

It is found in the cell membrane. Its subcellular location is the synapse. Its function is as follows. Important modulator of glutamate signaling pathway. The sequence is that of DOMON domain-containing protein FRRS1L (FRRS1L) from Homo sapiens (Human).